A 316-amino-acid chain; its full sequence is Transaldolase (316 aa).

Catalysis depends on lysine 127, which acts as the Schiff-base intermediate with substrate.

The protein belongs to the transaldolase family. Type 2 subfamily.

The protein resides in the cytoplasm. The enzyme catalyses D-sedoheptulose 7-phosphate + D-glyceraldehyde 3-phosphate = D-erythrose 4-phosphate + beta-D-fructose 6-phosphate. It participates in carbohydrate degradation; pentose phosphate pathway; D-glyceraldehyde 3-phosphate and beta-D-fructose 6-phosphate from D-ribose 5-phosphate and D-xylulose 5-phosphate (non-oxidative stage): step 2/3. In terms of biological role, transaldolase is important for the balance of metabolites in the pentose-phosphate pathway. This is Transaldolase from Helicobacter pylori (strain P12).